A 37-amino-acid chain; its full sequence is Serrulin (37 aa).

A disordered region spans residues 16-37 (FGGGGIGGGGFGGGYGGGKIKG). K36 is modified (lysine amide).

Expressed in hemocytes (at protein level).

It is found in the secreted. Antimicrobial protein with activity against Gram-positive and Gram-negative bacteria, filamentous fungus, and yeast. Was tested against Micrococcus luteus A270 (MIC=0.5-1 uM), Echerichia coli SBS 363 (MIC=9-16 uM), Pseudomonas aeruginosa (MIC=0.01-0.3 uM), Aspergillus niger (MIC=3-6 uM), and Candida albicans MDM8 (MIC=1.5-3 uM). Has no hemolytic activity against human erythrocytes. This chain is Serrulin, found in Tityus serrulatus (Brazilian scorpion).